A 309-amino-acid chain; its full sequence is Aspartate carbamoyltransferase catalytic subunit (309 aa).

Residues R57 and T58 each contribute to the carbamoyl phosphate site. K86 contributes to the L-aspartate binding site. R107, H135, and Q138 together coordinate carbamoyl phosphate. L-aspartate contacts are provided by R168 and R228. The carbamoyl phosphate site is built by L267 and P268.

Belongs to the aspartate/ornithine carbamoyltransferase superfamily. ATCase family. Heterooligomer of catalytic and regulatory chains.

The enzyme catalyses carbamoyl phosphate + L-aspartate = N-carbamoyl-L-aspartate + phosphate + H(+). Its pathway is pyrimidine metabolism; UMP biosynthesis via de novo pathway; (S)-dihydroorotate from bicarbonate: step 2/3. Catalyzes the condensation of carbamoyl phosphate and aspartate to form carbamoyl aspartate and inorganic phosphate, the committed step in the de novo pyrimidine nucleotide biosynthesis pathway. The chain is Aspartate carbamoyltransferase catalytic subunit from Nitrosopumilus maritimus (strain SCM1).